The chain runs to 107 residues: Nucleoid-associated protein PPA0205 (107 aa).

The protein belongs to the YbaB/EbfC family. In terms of assembly, homodimer.

It is found in the cytoplasm. The protein localises to the nucleoid. Its function is as follows. Binds to DNA and alters its conformation. May be involved in regulation of gene expression, nucleoid organization and DNA protection. This is Nucleoid-associated protein PPA0205 from Cutibacterium acnes (strain DSM 16379 / KPA171202) (Propionibacterium acnes).